Reading from the N-terminus, the 720-residue chain is Secreted RxLR effector protein 138 (720 aa).

The signal sequence occupies residues 1-20 (MRSAFYVAIVLLVAAGSQTA). The RxLR-dEER signature appears at 56 to 71 (RNLKDDFMFSAGDEER). Residues 264–335 (ESNTRKRNNV…VAPPEPSRLD (72 aa)) are disordered. Basic and acidic residues predominate over residues 320–335 (KQHDHRVAPPEPSRLD). Asn-609 is a glycosylation site (N-linked (GlcNAc...) asparagine).

Belongs to the RxLR effector family.

Its subcellular location is the secreted. The protein resides in the host nucleus. In terms of biological role, secreted effector that acts as an elicitor that induces cell death in host plant cells. The chain is Secreted RxLR effector protein 138 from Plasmopara viticola (Downy mildew of grapevine).